We begin with the raw amino-acid sequence, 439 residues long: UPF0489 protein C5orf22 homolog (439 aa).

The interval 163–219 (TTKLENGQSGAKIPKAAQTQDDMQSKADTPCTSSSQPPDGSAASGNISETAKKKADD) is disordered. Residues 179–211 (AQTQDDMQSKADTPCTSSSQPPDGSAASGNISE) show a composition bias toward polar residues.

The protein belongs to the UPF0489 family.

The chain is UPF0489 protein C5orf22 homolog from Danio rerio (Zebrafish).